The following is a 261-amino-acid chain: Pantothenate synthetase (261 aa).

29 to 36 is an ATP binding site; the sequence is MGALHNGH. His36 functions as the Proton donor in the catalytic mechanism. Gln60 lines the (R)-pantoate pocket. A beta-alanine-binding site is contributed by Gln60. 147–150 contributes to the ATP binding site; it reads GEKD. Gln153 is a (R)-pantoate binding site. Position 184–187 (184–187) interacts with ATP; it reads LSSR.

This sequence belongs to the pantothenate synthetase family. As to quaternary structure, homodimer.

Its subcellular location is the cytoplasm. The catalysed reaction is (R)-pantoate + beta-alanine + ATP = (R)-pantothenate + AMP + diphosphate + H(+). The protein operates within cofactor biosynthesis; (R)-pantothenate biosynthesis; (R)-pantothenate from (R)-pantoate and beta-alanine: step 1/1. Its function is as follows. Catalyzes the condensation of pantoate with beta-alanine in an ATP-dependent reaction via a pantoyl-adenylate intermediate. The polypeptide is Pantothenate synthetase (Francisella philomiragia subsp. philomiragia (strain ATCC 25017 / CCUG 19701 / FSC 153 / O#319-036)).